Reading from the N-terminus, the 1067-residue chain is Probable importin subunit beta-4 (1067 aa).

The Importin N-terminal domain maps to Ala-27–Lys-94. HEAT repeat units follow at residues Lys-159–Ser-196, Gly-379–Thr-416, Lys-420–Lys-457, Pro-591–Thr-633, Pro-890–Glu-927, and Gln-1013–Pro-1050.

The protein belongs to the importin beta family.

The protein localises to the cytoplasm. It is found in the nucleus. The protein resides in the nucleus envelope. In terms of biological role, required for nuclear protein import, its predominant substrate seems to be ribosomal proteins. Binds to nucleoporins and the GTP-bound form of gsp1 (Ran). The protein is Probable importin subunit beta-4 (kap123) of Schizosaccharomyces pombe (strain 972 / ATCC 24843) (Fission yeast).